We begin with the raw amino-acid sequence, 159 residues long: Putative pre-16S rRNA nuclease (159 aa).

This sequence belongs to the YqgF nuclease family.

It is found in the cytoplasm. In terms of biological role, could be a nuclease involved in processing of the 5'-end of pre-16S rRNA. The sequence is that of Putative pre-16S rRNA nuclease from Bartonella henselae (strain ATCC 49882 / DSM 28221 / CCUG 30454 / Houston 1) (Rochalimaea henselae).